A 948-amino-acid polypeptide reads, in one-letter code: P cell-type agglutination protein map4 (948 aa).

Positions 1-23 (MNSYAILLSLFFSFERLLTLANA) are cleaved as a signal peptide. N-linked (GlcNAc...) asparagine glycosylation is found at N31, N32, and N57. Disordered stretches follow at residues 136–174 (IPRGDSATSTSIAPTYSASDSSATTITSSSPSTSIIGTG) and 253–333 (FYET…PTTY). Over residues 149-174 (PTYSASDSSATTITSSSPSTSIIGTG) the composition is skewed to low complexity. Residues 253-264 (FYETKSSTSSVP) are compositionally biased toward polar residues. Low complexity predominate over residues 265–332 (TQTIDSSSFT…PSLSSALPTT (68 aa)). N383 is a glycosylation site (N-linked (GlcNAc...) asparagine). Positions 408–432 (LTSSTKKIPSTTLPTSSKMITTTTP) are disordered. N-linked (GlcNAc...) asparagine glycans are attached at residues N436, N469, N491, N522, N553, N568, and N598. 5 repeat units span residues 617–652 (SYVTETTTSGSVGFTTTIATPVGSTAGTVVVDIPTP), 653–688 (SWVTETVTSGSVGFTTTIATPVGSTAGTVLVDIPTP), 689–724 (SWVTETVTSGSVEFTTTIATPVGTTAGTVVVDIPTP), 725–760 (SWVTETVTSGSVGFTTTIATPIGTTAGTVLVDIPTP), and 761–796 (SWVTETVTSGSVGFTTTIATPVGTTAGTVLIDVPTP). The 5 X 36 AA approximate tandem repeats stretch occupies residues 617–796 (SYVTETTTSG…GTVLIDVPTP (180 aa)). In terms of domain architecture, DIPSY spans 796–948 (PTASSSPFPS…ANVVLRALEY (153 aa)). N921 is a glycosylation site (N-linked (GlcNAc...) asparagine).

The protein belongs to the mam3/map4 family.

It is found in the cell surface. P cell-type specific protein which involved in agglutination during conjugation. The chain is P cell-type agglutination protein map4 from Schizosaccharomyces pombe (strain 972 / ATCC 24843) (Fission yeast).